A 270-amino-acid polypeptide reads, in one-letter code: A-type potassium channel modulatory protein KCNIP2 (270 aa).

Over residues 1–17 (MRGQGRKESLSESRDLD) the composition is skewed to basic and acidic residues. The disordered stretch occupies residues 1 to 34 (MRGQGRKESLSESRDLDGSYDQLTGHPPGPSKKA). A Phosphoserine modification is found at Ser9. S-palmitoyl cysteine attachment occurs at residues Cys45 and Cys46. The EF-hand 1; degenerate domain maps to 81 to 137 (FELSTVCHRPEGLEQLQEQTKFTRRELQVLYRGFKNECPSGIVNEENFKQIYSQFFP). EF-hand domains lie at 140–175 (DSSN…ILRG), 176–211 (TIDD…IYDM), and 224–259 (APRE…DENI). Positions 153, 155, 157, 159, 164, 189, 191, 193, 195, 200, 237, 239, 241, and 248 each coordinate Ca(2+). Residues 257–270 (ENIMRSMQLFDNVI) are interaction with KCND2.

Belongs to the recoverin family. As to quaternary structure, component of heteromultimeric potassium channels. Identified in potassium channel complexes containing KCND1, KCND2, KCND3, KCNIP1, KCNIP2, KCNIP3, KCNIP4, DPP6 and DPP10. The KCND2-KCNIP2 channel complex contains four KCND2 and four KCNIP2 subunits. Interacts with KCND2. Probably part of a complex consisting of KCNIP1, KCNIP2 isoform 3 and KCND2. At least isoform 2 and isoform 3 can self-associate to form homodimers and homotetramers. Isoform 3 interacts with KCNIP1 in a calcium-dependent manner. Interacts with KCND3; each KCNIP2 monomer interacts with two adjacent KCND3 subunits, through both the N-terminal inactivation ball of a KCND3 subunit and a C-terminal helix from the adjacent KCND3 subunit, clamping them together; this interaction modulates the channel gating kinetics. Post-translationally, palmitoylated. Palmitoylation enhances association with the plasma membrane. In terms of tissue distribution, expressed in heart, brain and lung. In brain, abundantly expressed in striatum, hippocampus and olfactory bulb, moderately expressed in cerebral cortex and lowly expressed in thalamus and hypothalamus. Isoform 1 is predominant in cerebral cortex, striatum and hippocampus. Isoform 1, isoform 2 and isoform 3 are equally expressed in olfactory bulb. Iisoform 3 is expressed at high levels and isoform 1 at low levels in heart (in PubMed:11263977).

It is found in the cell membrane. Regulatory subunit of Kv4/D (Shal)-type voltage-gated rapidly inactivating A-type potassium channels. Modulates channel density, inactivation kinetics and rate of recovery from inactivation in a calcium-dependent and isoform-specific manner. Involved in KCND2 and KCND3 trafficking to the cell surface. Essential for the expression of I(To) currents in the heart. Required for normal protein levels of KCND2 in the heart ventricle. In Rattus norvegicus (Rat), this protein is A-type potassium channel modulatory protein KCNIP2.